The primary structure comprises 261 residues: Eukaryotic translation initiation factor 3 subunit J-A (261 aa).

Positions methionine 1–alanine 11 are enriched in low complexity. The interval methionine 1–proline 113 is disordered. Residues alanine 4–valine 72 form a sufficient for interaction with EIF3B region. 3 positions are modified to phosphoserine: serine 14, serine 16, and serine 23. Acidic residues predominate over residues glutamate 43–glutamate 64. Residues glutamate 65 to lysine 109 show a composition bias toward basic and acidic residues. Residues lysine 73–threonine 138 adopt a coiled-coil conformation. A Glycyl lysine isopeptide (Lys-Gly) (interchain with G-Cter in SUMO2) cross-link involves residue lysine 109. A Phosphothreonine modification is found at threonine 112. Serine 130 is modified (phosphoserine). Positions tyrosine 246–methionine 261 are promotes stable association with the 40S ribosome. Tyrosine 257 bears the Phosphotyrosine mark.

Belongs to the eIF-3 subunit J family. Component of the eukaryotic translation initiation factor 3 (eIF-3) complex, which is composed of 13 subunits: EIF3A, EIF3B, EIF3C, EIF3D, EIF3E, EIF3F, EIF3G, EIF3H, EIF3I, EIF3J, EIF3K, EIF3L and EIF3M. The eIF-3 complex appears to include 3 stable modules: module A is composed of EIF3A, EIF3B, EIF3G and EIF3I; module B is composed of EIF3F, EIF3H, and EIF3M; and module C is composed of EIF3C, EIF3D, EIF3E, EIF3K and EIF3L. EIF3C of module C binds EIF3B of module A and EIF3H of module B, thereby linking the three modules. EIF3J is a labile subunit that binds to the eIF-3 complex via EIF3B. The eIF-3 complex interacts with RPS6KB1 under conditions of nutrient depletion. Mitogenic stimulation leads to binding and activation of a complex composed of MTOR and RPTOR, leading to phosphorylation and release of RPS6KB1 and binding of EIF4B to eIF-3. Phosphorylated. Phosphorylation is enhanced upon serum stimulation.

The protein localises to the cytoplasm. Functionally, component of the eukaryotic translation initiation factor 3 (eIF-3) complex, which is required for several steps in the initiation of protein synthesis. The eIF-3 complex associates with the 40S ribosome and facilitates the recruitment of eIF-1, eIF-1A, eIF-2:GTP:methionyl-tRNAi and eIF-5 to form the 43S pre-initiation complex (43S PIC). The eIF-3 complex stimulates mRNA recruitment to the 43S PIC and scanning of the mRNA for AUG recognition. The eIF-3 complex is also required for disassembly and recycling of post-termination ribosomal complexes and subsequently prevents premature joining of the 40S and 60S ribosomal subunits prior to initiation. The eIF-3 complex specifically targets and initiates translation of a subset of mRNAs involved in cell proliferation, including cell cycling, differentiation and apoptosis, and uses different modes of RNA stem-loop binding to exert either translational activation or repression. This subunit binds directly within the mRNA entry channel of the 40S ribosome to the aminoacyl (A) site. It may regulate the interaction between the 43S PIC and mRNA. The chain is Eukaryotic translation initiation factor 3 subunit J-A (Eif3j1) from Mus musculus (Mouse).